A 268-amino-acid polypeptide reads, in one-letter code: 4-hydroxy-tetrahydrodipicolinate reductase (268 aa).

NAD(+) is bound at residue 8–13 (GAAGRM). R36 contacts NADP(+). NAD(+) is bound by residues 99–101 (GTT) and 123–126 (AANF). H156 functions as the Proton donor/acceptor in the catalytic mechanism. Position 157 (H157) interacts with (S)-2,3,4,5-tetrahydrodipicolinate. Catalysis depends on K160, which acts as the Proton donor. (S)-2,3,4,5-tetrahydrodipicolinate is bound at residue 166–167 (GT).

It belongs to the DapB family.

Its subcellular location is the cytoplasm. The catalysed reaction is (S)-2,3,4,5-tetrahydrodipicolinate + NAD(+) + H2O = (2S,4S)-4-hydroxy-2,3,4,5-tetrahydrodipicolinate + NADH + H(+). The enzyme catalyses (S)-2,3,4,5-tetrahydrodipicolinate + NADP(+) + H2O = (2S,4S)-4-hydroxy-2,3,4,5-tetrahydrodipicolinate + NADPH + H(+). Its pathway is amino-acid biosynthesis; L-lysine biosynthesis via DAP pathway; (S)-tetrahydrodipicolinate from L-aspartate: step 4/4. Functionally, catalyzes the conversion of 4-hydroxy-tetrahydrodipicolinate (HTPA) to tetrahydrodipicolinate. In Pseudomonas fluorescens (strain SBW25), this protein is 4-hydroxy-tetrahydrodipicolinate reductase.